A 436-amino-acid polypeptide reads, in one-letter code: Prenyltransferase nscD (436 aa).

This sequence belongs to the tryptophan dimethylallyltransferase family.

Its pathway is secondary metabolite biosynthesis. Its function is as follows. Prenyltransferase; part of the gene cluster that mediates the biosynthesis of neosartoricin B, a prenylated anthracenone that probably exhibits T-cell antiproliferative activity, suggestive of a physiological role as an immunosuppressive agent. The non-reducing polyketide synthase nscA probably synthesizes and cyclizes the decaketide backbone. The hydrolase nscB then mediates the product release through hydrolysis followed by spontaneous decarboxylation. The prenyltransferase nscD catalyzes the addition of the dimethylallyl group to the aromatic C5. The FAD-dependent monooxygenase nscC is then responsible for the stereospecific hydroxylation at C2. Neosartoricin B can be converted into two additional compounds neosartoricins C and D. Neosartoricin C is a spirocyclic compound that is cyclized through the attack of C3 hydroxyl on C14, followed by dehydration. On the other hand, neosartoricin D is a further cyclized compound in which attack of C2 on C14 in neosartoricin C results in the formation of the acetal-containing dioxabicyclo-octanone ring. Both of these compounds are novel and possibly represent related metabolites of the gene cluster. This Arthroderma otae (strain ATCC MYA-4605 / CBS 113480) (Microsporum canis) protein is Prenyltransferase nscD.